An 83-amino-acid chain; its full sequence is Delta-conotoxin-like Ac6.2 (83 aa).

The signal sequence occupies residues 1-22 (MKLTCVVIVAVLFLTAWTFVTA). Positions 23-51 (DDSRYGLKNLFPKARHEMKNPEASKLNKR) are excised as a propeptide. 3 disulfide bridges follow: Cys-54/Cys-69, Cys-61/Cys-73, and Cys-68/Cys-78. 4-hydroxyproline is present on residues Pro-57 and Pro-65.

The protein belongs to the conotoxin O1 superfamily. In terms of tissue distribution, expressed by the venom duct.

It localises to the secreted. Functionally, delta-conotoxins bind to site 6 of voltage-gated sodium channels (Nav) and inhibit the inactivation process. The chain is Delta-conotoxin-like Ac6.2 from Conus achatinus (Little frog cone).